A 465-amino-acid polypeptide reads, in one-letter code: Argininosuccinate lyase (465 aa).

This sequence belongs to the lyase 1 family. Argininosuccinate lyase subfamily.

Its subcellular location is the cytoplasm. It catalyses the reaction 2-(N(omega)-L-arginino)succinate = fumarate + L-arginine. The protein operates within amino-acid biosynthesis; L-arginine biosynthesis; L-arginine from L-ornithine and carbamoyl phosphate: step 3/3. This is Argininosuccinate lyase from Rhodopseudomonas palustris (strain BisB18).